The primary structure comprises 170 residues: Disulfide bond formation protein B 1 (170 aa).

Over 1–14 the chain is Cytoplasmic; the sequence is MNDYTLAIRRERRL. The chain crosses the membrane as a helical span at residues 15 to 31; it reads LMLLGWVCIALLAGALY. Residues 32-49 are Periplasmic-facing; the sequence is LQYVKNEDPCPLCIIQRY. An intrachain disulfide couples C41 to C44. Residues 50–64 form a helical membrane-spanning segment; sequence FFCAIGIFAFLAAGI. Over 65–71 the chain is Cytoplasmic; it reads RNWRGVW. The chain crosses the membrane as a helical span at residues 72–89; that stretch reads VLELLIAIAAAGGVGTAA. Residues 90–144 are Periplasmic-facing; sequence RHLTIQMNPGFSCGFDTLQPIVDSLPPAQWFPGMFKVAGLCETVYPPIFGILLPG. The cysteines at positions 102 and 130 are disulfide-linked. Residues 145–163 traverse the membrane as a helical segment; the sequence is WSLIGFAVILIAVVASLWR. Residues 164–170 are Cytoplasmic-facing; that stretch reads HRRKLVG.

Belongs to the DsbB family.

It localises to the cell inner membrane. Functionally, required for disulfide bond formation in some periplasmic proteins. Acts by oxidizing the DsbA protein. The protein is Disulfide bond formation protein B 1 of Burkholderia lata (strain ATCC 17760 / DSM 23089 / LMG 22485 / NCIMB 9086 / R18194 / 383).